The following is a 690-amino-acid chain: Protein arginine N-methyltransferase 7 (690 aa).

SAM-dependent MTase PRMT-type domains follow at residues Glu14–Trp357 and Ala366–Pro690.

The protein belongs to the class I-like SAM-binding methyltransferase superfamily. Protein arginine N-methyltransferase family. PRMT7 subfamily.

Essential arginine methyltransferase that can both catalyze the formation of omega-N monomethylarginine (MMA) and symmetrical dimethylarginine (sDMA). Specifically mediates the symmetrical dimethylation of arginine residues in the small nuclear ribonucleoproteins SmD1 and SmD3. In Drosophila ananassae (Fruit fly), this protein is Protein arginine N-methyltransferase 7 (Art7).